Here is a 637-residue protein sequence, read N- to C-terminus: Nuclear receptor subfamily 2 group C member 1-A (637 aa).

The segment at residues 149 to 224 (VELCVVCGDK…LGMKQDSVQC (76 aa)) is a DNA-binding region (nuclear receptor). 2 consecutive NR C4-type zinc fingers follow at residues 152-172 (CVVC…CEGC) and 188-207 (CRGS…CQYC). The NR LBD domain maps to 383 to 624 (CLGSNANLLH…SIIPYILRME (242 aa)).

The protein belongs to the nuclear hormone receptor family. NR2 subfamily.

The protein resides in the nucleus. Functionally, orphan nuclear receptor. Binds the IR7 element in the promoter of its own gene in an autoregulatory negative feedback mechanism. Primarily repressor of a broad range of genes. Binds to hormone response elements (HREs) consisting of two 5'-AGGTCA-3' half site direct repeat consensus sequences. The chain is Nuclear receptor subfamily 2 group C member 1-A (nr2c1-a) from Xenopus laevis (African clawed frog).